We begin with the raw amino-acid sequence, 110 residues long: Bowman-Birk type proteinase inhibitor (110 aa).

The N-terminal stretch at 1 to 19 (MVVLKVCLVLLFLVGGTTS) is a signal peptide. A propeptide spanning residues 20-39 (ANLRLSKLGLLMKSDHQHSN) is cleaved from the precursor. Disulfide bonds link C47/C101, C48/C63, C51/C97, C53/C61, C71/C78, C75/C90, and C80/C88.

Belongs to the Bowman-Birk serine protease inhibitor family.

Functionally, inhibitor of trypsin and of chymotrypsin. In Glycine max (Soybean), this protein is Bowman-Birk type proteinase inhibitor.